The chain runs to 258 residues: Tryptophan synthase alpha chain (258 aa).

Catalysis depends on proton acceptor residues Glu-47 and Asp-58.

The protein belongs to the TrpA family. As to quaternary structure, tetramer of two alpha and two beta chains.

The catalysed reaction is (1S,2R)-1-C-(indol-3-yl)glycerol 3-phosphate + L-serine = D-glyceraldehyde 3-phosphate + L-tryptophan + H2O. It functions in the pathway amino-acid biosynthesis; L-tryptophan biosynthesis; L-tryptophan from chorismate: step 5/5. Functionally, the alpha subunit is responsible for the aldol cleavage of indoleglycerol phosphate to indole and glyceraldehyde 3-phosphate. This is Tryptophan synthase alpha chain from Bacillus cereus (strain B4264).